A 344-amino-acid polypeptide reads, in one-letter code: 2-aminoethylphosphonate--pyruvate transaminase (344 aa).

An N6-(pyridoxal phosphate)lysine modification is found at K194.

Belongs to the class-V pyridoxal-phosphate-dependent aminotransferase family. PhnW subfamily. As to quaternary structure, homodimer. It depends on pyridoxal 5'-phosphate as a cofactor.

It catalyses the reaction (2-aminoethyl)phosphonate + pyruvate = phosphonoacetaldehyde + L-alanine. Its function is as follows. Involved in phosphonate degradation. In Bacillus cereus, this protein is 2-aminoethylphosphonate--pyruvate transaminase.